The primary structure comprises 402 residues: Nicotinate phosphoribosyltransferase (402 aa).

H224 carries the post-translational modification Phosphohistidine; by autocatalysis.

It belongs to the NAPRTase family. In terms of processing, transiently phosphorylated on a His residue during the reaction cycle. Phosphorylation strongly increases the affinity for substrates and increases the rate of nicotinate D-ribonucleotide production. Dephosphorylation regenerates the low-affinity form of the enzyme, leading to product release.

It catalyses the reaction nicotinate + 5-phospho-alpha-D-ribose 1-diphosphate + ATP + H2O = nicotinate beta-D-ribonucleotide + ADP + phosphate + diphosphate. The protein operates within cofactor biosynthesis; NAD(+) biosynthesis; nicotinate D-ribonucleotide from nicotinate: step 1/1. Its function is as follows. Catalyzes the synthesis of beta-nicotinate D-ribonucleotide from nicotinate and 5-phospho-D-ribose 1-phosphate at the expense of ATP. This Neisseria meningitidis serogroup A / serotype 4A (strain DSM 15465 / Z2491) protein is Nicotinate phosphoribosyltransferase.